The primary structure comprises 442 residues: Putative arsenical pump membrane protein (442 aa).

11 consecutive transmembrane segments (helical) span residues 22 to 42 (IPAT…LADL), 56 to 76 (ILAT…YWVA), 85 to 105 (GSGI…TIFL), 107 to 127 (NDGS…YLGL), 136 to 156 (LLSG…SNIV), 174 to 194 (MMFV…FMFF), 250 to 270 (LFAA…GSFI), 294 to 314 (IFIF…IGFT), 328 to 347 (SLAH…SNLF), 378 to 398 (IIGS…TLIW), and 419 to 439 (IIII…WISW).

This sequence belongs to the ArsB family.

The protein resides in the cell membrane. This Bacillus subtilis (strain 168) protein is Putative arsenical pump membrane protein (ywrK).